A 1410-amino-acid polypeptide reads, in one-letter code: Ribosome-binding protein 1 (1410 aa).

The Lumenal segment spans residues 1-7 (MDIYDTQ). The chain crosses the membrane as a helical span at residues 8-28 (TLGVVVFGGFMVVSAIGIFLV). Residues 29–1410 (STFSMKETSY…GSSSKEGTSV (1382 aa)) lie on the Cytoplasmic side of the membrane. 2 disordered regions span residues 44–90 (NQRK…DPAP) and 129–152 (QEKL…VEPA). The segment covering 52 to 63 (THHQKVEKKKKE) has biased composition (basic residues). The span at 64–88 (KTVEKKGKTKKKEEKPNGKIPDHDP) shows a compositional bias: basic and acidic residues. Residue Lys148 forms a Glycyl lysine isopeptide (Lys-Gly) (interchain with G-Cter in SUMO2) linkage. Phosphoserine occurs at positions 159 and 165. Disordered regions lie at residues 173 to 648 (APKE…PLYL) and 895 to 925 (QSSH…LQSS). 2 stretches are compositionally biased toward polar residues: residues 191–209 (TPAT…QNQS) and 225–238 (TPNQ…TPNQ). Tandem repeats lie at residues 197-206 (TQGKKAEGTQ), 207-216 (NQSKKAEGAP), 217-226 (NQGRKAEGTP), 227-236 (NQGKKTEGTP), 237-246 (NQGKKAEGTP), 247-256 (NQGKKAEGTP), 257-266 (NQGKKAEGAQ), 267-276 (NQGKKVDTTP), 277-286 (NQGKKVEGAP), 287-296 (TQGRKAEGAQ), 297-306 (NQAKKVEGAQ), 307-316 (NQGKKAEGAQ), 317-326 (NQGKKGEGAQ), 327-336 (NQGKKAEGAQ), 337-346 (NQGKKAEGAQ), 347-356 (NQGKKAEGAQ), 357-366 (NQGKKAEGAQ), 367-376 (NQGKKAEGAQ), 377-386 (NQGKKAEGAQ), 387-396 (NQGKKVEGAQ), 397-406 (NQGKKAEGAQ), 407-416 (NQGKKAEGAQ), 417-426 (NQGKKAEGAQ), 427-436 (NQGKKAEGAQ), 437-446 (NQGKKAEGAQ), 447-456 (NQGKKAEGAQ), 457-466 (NQGKKAEGAQ), 467-476 (NQGKKVEGAQ), 477-486 (NQGKKAEGAQ), 487-496 (NQGKKAEGAQ), 497-506 (NQGKKAEGAQ), 507-516 (NQGQKGEGAQ), and 517-526 (NQGKKTEGAQ). A 41 X 10 AA approximate tandem repeats of [TN]-Q-[GSA]-[KRQT]-K-[ATGSV]-[ED]-[GTAS]-[ATIS]-[PQTAS] region spans residues 197 to 604 (TQGKKAEGTQ…NQGKKTESAS (408 aa)). A phosphothreonine mark is found at Thr225, Thr235, Thr245, and Thr255. 2 stretches are compositionally biased toward polar residues: residues 265–278 (AQNQ…TPNQ) and 295–519 (AQNQ…QNQG). Residues 520–532 (KKTEGAQGKKAER) show a composition bias toward basic and acidic residues. A 34; approximate repeat occupies 527–534 (GKKAERSP). Ser533 is subject to Phosphoserine. Repeat unit 35 spans residues 535–544 (NQGKKGEGAP). Residues 545-554 (IQGKKADSVA) form a 36; approximate repeat. Over residues 553–567 (VANQGTKVEGITNQG) the composition is skewed to polar residues. 2 consecutive repeat copies span residues 555-564 (NQGTKVEGIT) and 565-574 (NQGKKAEGSP). Positions 568–581 (KKAEGSPSEGKKAE) are enriched in basic and acidic residues. A phosphoserine mark is found at Ser573 and Ser583. One copy of the 39; approximate repeat lies at 575-584 (SEGKKAEGSP). A run of 2 repeats spans residues 585–594 (NQGKKADAAA) and 595–604 (NQGKKTESAS). A compositionally biased stretch (polar residues) spans 602–612 (SASVQGRNTDV). The residue at position 615 (Ser615) is a Phosphoserine. Lys620 is covalently cross-linked (Glycyl lysine isopeptide (Lys-Gly) (interchain with G-Cter in SUMO1)). Ser900 carries the phosphoserine modification. Lys932 is modified (N6-acetyllysine). Ser959 and Ser978 each carry phosphoserine. Disordered regions lie at residues 1093-1122 (GPTL…ETQS), 1260-1287 (EMKS…EQDP), 1330-1362 (EKLR…LTSD), and 1378-1410 (QEQL…GTSV). A phosphoserine mark is found at Ser1276 and Ser1277. Composition is skewed to basic and acidic residues over residues 1347 to 1360 (SQLK…KKLT) and 1381 to 1403 (LARE…DGSS).

It localises to the endoplasmic reticulum membrane. Functionally, acts as a ribosome receptor and mediates interaction between the ribosome and the endoplasmic reticulum membrane. This chain is Ribosome-binding protein 1 (RRBP1), found in Homo sapiens (Human).